Here is a 638-residue protein sequence, read N- to C-terminus: 1-deoxy-D-xylulose-5-phosphate synthase (638 aa).

Thiamine diphosphate is bound by residues His76 and 117 to 119 (AHS). Asp148 serves as a coordination point for Mg(2+). Residues 149 to 150 (GS), Asn177, Tyr287, and Glu369 contribute to the thiamine diphosphate site. Asn177 is a Mg(2+) binding site.

This sequence belongs to the transketolase family. DXPS subfamily. As to quaternary structure, homodimer. Mg(2+) is required as a cofactor. Thiamine diphosphate serves as cofactor.

The enzyme catalyses D-glyceraldehyde 3-phosphate + pyruvate + H(+) = 1-deoxy-D-xylulose 5-phosphate + CO2. The protein operates within metabolic intermediate biosynthesis; 1-deoxy-D-xylulose 5-phosphate biosynthesis; 1-deoxy-D-xylulose 5-phosphate from D-glyceraldehyde 3-phosphate and pyruvate: step 1/1. Catalyzes the acyloin condensation reaction between C atoms 2 and 3 of pyruvate and glyceraldehyde 3-phosphate to yield 1-deoxy-D-xylulose-5-phosphate (DXP). The polypeptide is 1-deoxy-D-xylulose-5-phosphate synthase (Rhodopseudomonas palustris (strain HaA2)).